We begin with the raw amino-acid sequence, 672 residues long: MTDIQNQINQLRNTLRHHEYQYHVLDNPEIPDSEYDRLFHRLKALEQQHPELISADSPTQRVGAKPLAGFAQITHELPMLSLDNVFSDEEFYAFVKRIQERLITLPDNLEFCCEPKLDGLAVSILYENGRLVQAATRGDGTTGEDITLNIRTIRNIPLQLLTDNPPVRLEVRGEVFMPQEGFDRLNEAALARGEKTFANPRNAAAGSLRQLDPKITSQRPLVWNAYSIGIAEGADLPPTHYERLQWLKSIGIPVNGEIRLCRGAENVLKFYRTIQEKRPELGYDIDGTVLKVNEIALQERLGFISKAPRWAIAYKFPAQEEMTVLNDVEFQVGRTGAITPVAKLQPVFVAGVTVSNATLHNGDEIARLDIAIGDTVIVRRAGDVIPQIIGVVHDRRPPNAEPIIFPTLCPVCHSAIVRIEGEAVARCTGGLFCDAQRKESLKHFVSRRAMDIDGVGAKLIEQLVDRELIRTPADLFKLDLITLMRLERMGEKSAQKALDSLEKAKKTTLARFIFALGIREVGEATALNLANFFKNLTALQTADLEQLQAVSDVGEVVANRIYVFWREQHNIDVVNDLIAQGVHWDDVEEKQVNENPFKEKTVVLTGTLSQMGRNEAKALLQQMGAKVAGSVSAKTHIVIAGDSAGSKLSKAQDLGVAVMSEAEFLEIVNSFS.

Residues 32–36, 81–82, and Glu114 contribute to the NAD(+) site; these read DSEYD and SL. The N6-AMP-lysine intermediate role is filled by Lys116. Positions 137, 174, 291, and 315 each coordinate NAD(+). 4 residues coordinate Zn(2+): Cys409, Cys412, Cys427, and Cys433. The 81-residue stretch at 592 to 672 folds into the BRCT domain; that stretch reads VNENPFKEKT…EFLEIVNSFS (81 aa).

This sequence belongs to the NAD-dependent DNA ligase family. LigA subfamily. Mg(2+) is required as a cofactor. Requires Mn(2+) as cofactor.

It carries out the reaction NAD(+) + (deoxyribonucleotide)n-3'-hydroxyl + 5'-phospho-(deoxyribonucleotide)m = (deoxyribonucleotide)n+m + AMP + beta-nicotinamide D-nucleotide.. Its function is as follows. DNA ligase that catalyzes the formation of phosphodiester linkages between 5'-phosphoryl and 3'-hydroxyl groups in double-stranded DNA using NAD as a coenzyme and as the energy source for the reaction. It is essential for DNA replication and repair of damaged DNA. The protein is DNA ligase of Actinobacillus succinogenes (strain ATCC 55618 / DSM 22257 / CCUG 43843 / 130Z).